The following is a 1017-amino-acid chain: Nonsense-mediated mRNA decay factor SMG5 (1017 aa).

At Ser2 the chain carries N-acetylserine. A phosphoserine mark is found at Ser2 and Ser423. 2 disordered regions span residues Gly406 to Ala562 and Thr597 to Glu640. The segment covering Lys448–Pro467 has biased composition (basic residues). Over residues Asp486–Ser496 the composition is skewed to low complexity. Over residues Ala620–Gly629 the composition is skewed to acidic residues. Positions Ala798–Glu842 form a coiled coil. One can recognise a PINc domain in the interval Arg873–Ala996.

In terms of assembly, interacts with TERT, PPP2CA and SMG1. Part of a complex that contains SMG1, SMG5, SMG7, PPP2CA, a short isoform of UPF3A (isoform UPF3AS, but not isoform UPF3AL) and phosphorylated UPF1. Not detected in complexes that contain unphosphorylated UPF1.

It localises to the cytoplasm. The protein localises to the nucleus. In terms of biological role, plays a role in nonsense-mediated mRNA decay. Does not have RNase activity by itself. Promotes dephosphorylation of UPF1. Together with SMG7 is thought to provide a link to the mRNA degradation machinery involving exonucleolytic pathways, and to serve as an adapter for UPF1 to protein phosphatase 2A (PP2A), thereby triggering UPF1 dephosphorylation. Necessary for TERT activity. This chain is Nonsense-mediated mRNA decay factor SMG5, found in Mus musculus (Mouse).